The chain runs to 68 residues: Large ribosomal subunit protein bL31 (68 aa).

Residues Cys16, Cys18, Cys37, and Cys40 each contribute to the Zn(2+) site.

It belongs to the bacterial ribosomal protein bL31 family. Type A subfamily. Part of the 50S ribosomal subunit. Requires Zn(2+) as cofactor.

Its function is as follows. Binds the 23S rRNA. This chain is Large ribosomal subunit protein bL31, found in Acidithiobacillus ferrooxidans (strain ATCC 23270 / DSM 14882 / CIP 104768 / NCIMB 8455) (Ferrobacillus ferrooxidans (strain ATCC 23270)).